Consider the following 435-residue polypeptide: Putative F-box/FBD/LRR-repeat protein At5g56810 (435 aa).

Positions 14–62 constitute an F-box domain; sequence PDRISQLPNDLLFRILSLIPVSDAMSTSLLSKRWKSVWKMLPTLVYNEN. LRR repeat units follow at residues 64 to 95, 146 to 173, 174 to 199, 222 to 248, 266 to 291, and 316 to 341; these read CSNI…TLEL, LKLQ…YLTC, VNFE…FLQR, KEQA…NIFD, SVRV…SLDL, and YDNF…KLNH. The FBD domain occupies 353–404; the sequence is CSVSEPSSVPECLSFHLETFQWIGYAGTFEEIAAAVYVLKNARCLKNATISL.

This chain is Putative F-box/FBD/LRR-repeat protein At5g56810, found in Arabidopsis thaliana (Mouse-ear cress).